A 55-amino-acid chain; its full sequence is ATP synthase F(0) complex subunit 8 (55 aa).

The chain crosses the membrane as a helical span at residues 4–24 (LNPAPWFAILVFSWLVFLTVI). The tract at residues 34 to 55 (TNEPTSQSTEKAKPEPWNWPWH) is disordered.

Belongs to the ATPase protein 8 family. As to quaternary structure, component of the ATP synthase complex composed at least of ATP5F1A/subunit alpha, ATP5F1B/subunit beta, ATP5MC1/subunit c (homooctomer), MT-ATP6/subunit a, MT-ATP8/subunit 8, ATP5ME/subunit e, ATP5MF/subunit f, ATP5MG/subunit g, ATP5MK/subunit k, ATP5MJ/subunit j, ATP5F1C/subunit gamma, ATP5F1D/subunit delta, ATP5F1E/subunit epsilon, ATP5PF/subunit F6, ATP5PB/subunit b, ATP5PD/subunit d, ATP5PO/subunit OSCP. ATP synthase complex consists of a soluble F(1) head domain (subunits alpha(3) and beta(3)) - the catalytic core - and a membrane F(0) domain - the membrane proton channel (subunits c, a, 8, e, f, g, k and j). These two domains are linked by a central stalk (subunits gamma, delta, and epsilon) rotating inside the F1 region and a stationary peripheral stalk (subunits F6, b, d, and OSCP).

The protein localises to the mitochondrion membrane. In terms of biological role, subunit 8, of the mitochondrial membrane ATP synthase complex (F(1)F(0) ATP synthase or Complex V) that produces ATP from ADP in the presence of a proton gradient across the membrane which is generated by electron transport complexes of the respiratory chain. ATP synthase complex consist of a soluble F(1) head domain - the catalytic core - and a membrane F(1) domain - the membrane proton channel. These two domains are linked by a central stalk rotating inside the F(1) region and a stationary peripheral stalk. During catalysis, ATP synthesis in the catalytic domain of F(1) is coupled via a rotary mechanism of the central stalk subunits to proton translocation. In vivo, can only synthesize ATP although its ATP hydrolase activity can be activated artificially in vitro. Part of the complex F(0) domain. This Oncorhynchus mykiss (Rainbow trout) protein is ATP synthase F(0) complex subunit 8.